Here is a 546-residue protein sequence, read N- to C-terminus: MRGELPNKHHSYTFFVFLFFFLILFPDLSISVNTLSATESLTISSNKTIVSPGGVFELGFFRILGDSWYLGIWYKKISQRTYVWVANRDTPLSNPIGILKISNANLVILDNSDTHVWSTNLTGAVRSSVVAELLDNGNFVLRGSKINESDEFLWQSFDFPTDTLLPQMKLGRDHKRGLNRFVTSWKSSFDPSSGSFMFKLETLGLPEFFGFTSFLEVYRSGPWDGLRFSGILEMQQWDDIIYNFTENREEVAYTFRVTDHNSYSRLTINTVGRLEGFTWEPTQQEWNMFWFMPKDTCDLYGICGPYAYCDMSTSPTCNCIKGFQPLSPQDWASGDVTGRCRRKTQLTCGEDRFFRLMNMKIPATTAAIVDKRIGLKECEEKCKTHCNCTAYANSDIRNGGSGCIIWIGEFRDIRNYAADGQDLFVRLAAAEFGERRTIRGKIIGLIIGISLMLVLSFIIYCFWKKKQKRARATAAPIGYRDRIQELIITNGVVMSSGRRLLGEEEDLELPLTEFETVVMATENFSDSNILGRGGFGIVYKGRLLDG.

The signal sequence occupies residues 1–31; the sequence is MRGELPNKHHSYTFFVFLFFFLILFPDLSIS. Over 32 to 441 the chain is Extracellular; that stretch reads VNTLSATESL…FGERRTIRGK (410 aa). Residues 34–154 form the Bulb-type lectin domain; sequence TLSATESLTI…KINESDEFLW (121 aa). N-linked (GlcNAc...) asparagine glycosylation is found at N46, N120, N147, and N243. An EGF-like; atypical domain is found at 293-329; the sequence is PKDTCDLYGICGPYAYCDMSTSPTCNCIKGFQPLSPQ. 4 disulfide bridges follow: C297/C309, C303/C317, C378/C403, and C382/C388. The PAN domain maps to 348-428; that stretch reads CGEDRFFRLM…DGQDLFVRLA (81 aa). N387 carries an N-linked (GlcNAc...) asparagine glycan. The chain crosses the membrane as a helical span at residues 442 to 462; that stretch reads IIGLIIGISLMLVLSFIIYCF. The Cytoplasmic segment spans residues 463–546; that stretch reads WKKKQKRARA…IVYKGRLLDG (84 aa). One can recognise a Protein kinase domain in the interval 524 to 546; the sequence is FSDSNILGRGGFGIVYKGRLLDG. 530–538 lines the ATP pocket; it reads LGRGGFGIV.

Belongs to the protein kinase superfamily. Ser/Thr protein kinase family.

It localises to the cell membrane. Its function is as follows. Truncated and inactivated form of SRK, the female specificity determinant of self-incompatibility when active. Most A.thaliana cultivars contain such an inactive form and thus, are self-fertiles. The chain is Putative inactive G-type lectin S-receptor-like serine/threonine-protein kinase SRK (PSEUDOSRKA) from Arabidopsis thaliana (Mouse-ear cress).